A 326-amino-acid chain; its full sequence is S-methyl-5'-thioadenosine phosphorylase (326 aa).

Residues Ser-44, 86–87, and 119–120 contribute to the phosphate site; these read RH and SA. Met-220 is a binding site for substrate. A phosphate-binding site is contributed by Thr-221. Residue 244 to 246 participates in substrate binding; it reads DYD.

Belongs to the PNP/MTAP phosphorylase family. MTAP subfamily. In terms of assembly, homohexamer. Dimer of a homotrimer.

It catalyses the reaction S-methyl-5'-thioadenosine + phosphate = 5-(methylsulfanyl)-alpha-D-ribose 1-phosphate + adenine. The protein operates within amino-acid biosynthesis; L-methionine biosynthesis via salvage pathway; S-methyl-5-thio-alpha-D-ribose 1-phosphate from S-methyl-5'-thioadenosine (phosphorylase route): step 1/1. Catalyzes the reversible phosphorylation of S-methyl-5'-thioadenosine (MTA) to adenine and 5-methylthioribose-1-phosphate. Involved in the breakdown of MTA, a major by-product of polyamine biosynthesis. Responsible for the first step in the methionine salvage pathway after MTA has been generated from S-adenosylmethionine. Has broad substrate specificity with 6-aminopurine nucleosides as preferred substrates. The protein is S-methyl-5'-thioadenosine phosphorylase of Synechocystis sp. (strain PCC 6803 / GT-S).